Reading from the N-terminus, the 124-residue chain is Small ribosomal subunit protein uS12 (124 aa).

Aspartate 89 is modified (3-methylthioaspartic acid).

It belongs to the universal ribosomal protein uS12 family. In terms of assembly, part of the 30S ribosomal subunit. Contacts proteins S8 and S17. May interact with IF1 in the 30S initiation complex.

Its function is as follows. With S4 and S5 plays an important role in translational accuracy. Interacts with and stabilizes bases of the 16S rRNA that are involved in tRNA selection in the A site and with the mRNA backbone. Located at the interface of the 30S and 50S subunits, it traverses the body of the 30S subunit contacting proteins on the other side and probably holding the rRNA structure together. The combined cluster of proteins S8, S12 and S17 appears to hold together the shoulder and platform of the 30S subunit. The protein is Small ribosomal subunit protein uS12 of Psychrobacter arcticus (strain DSM 17307 / VKM B-2377 / 273-4).